A 415-amino-acid chain; its full sequence is Peptide chain release factor subunit 1-1 (415 aa).

It belongs to the eukaryotic release factor 1 family. In terms of assembly, heterodimer of two subunits, one of which binds GTP.

The protein localises to the cytoplasm. Its function is as follows. Directs the termination of nascent peptide synthesis (translation) in response to the termination codons UAA, UAG and UGA. The polypeptide is Peptide chain release factor subunit 1-1 (Methanosarcina acetivorans (strain ATCC 35395 / DSM 2834 / JCM 12185 / C2A)).